The chain runs to 278 residues: MNVLEAVFLGAVEGLTEFLPVSSTGHLTILEKLLGHDIDDPDITAFTAIIQVGAVFATLLYFRHDFRRLLAAWGRGVRDPAWREHPDYRFGWAVILGSIPIGLVGVAFKDQIETTLRSLWFVGGALILWSGVMGYADHVGTQKRHEEDVTWKDTLVIGIVQCMALIPGISRSGATMSAGLLRGLDRVAVTRLSFFLSIPALMAAAALQVLTKSDDIADGVGWPATIIATVVSFAVAYVAIAWLLKFIARHSYSVFIGYRLALGATVLFLVATGIVSAT.

Transmembrane regions (helical) follow at residues 42–62, 88–108, 119–139, 187–207, 224–244, and 254–274; these read DITA…LLYF, YRFG…GVAF, LWFV…ADHV, VAVT…AAAL, ATII…AWLL, and VFIG…ATGI.

Belongs to the UppP family.

It is found in the cell membrane. It carries out the reaction di-trans,octa-cis-undecaprenyl diphosphate + H2O = di-trans,octa-cis-undecaprenyl phosphate + phosphate + H(+). Catalyzes the dephosphorylation of undecaprenyl diphosphate (UPP). Confers resistance to bacitracin. The chain is Undecaprenyl-diphosphatase 3 from Frankia casuarinae (strain DSM 45818 / CECT 9043 / HFP020203 / CcI3).